The sequence spans 200 residues: Recombination protein RecR (200 aa).

The C4-type zinc-finger motif lies at 58–75 (CPCCFCLKNFPESQCEFC). The 96-residue stretch at 82–177 (STLCIVASPK…SISRLALGLP (96 aa)) folds into the Toprim domain.

This sequence belongs to the RecR family.

Functionally, may play a role in DNA repair. It seems to be involved in an RecBC-independent recombinational process of DNA repair. It may act with RecF and RecO. The protein is Recombination protein RecR of Chlamydia felis (strain Fe/C-56) (Chlamydophila felis).